A 469-amino-acid polypeptide reads, in one-letter code: Autophagy-related protein 18 (469 aa).

2 WD repeats span residues 188 to 228 (AHRS…KLYQ) and 233 to 272 (TYPS…NGAS). A L/FRRG motif motif is present at residues 229 to 233 (FRRGT). Residues 285-348 (AASPGQDITG…RQSGSFSNIL (64 aa)) are disordered. Residues 297–306 (RADRWSRSRS) are compositionally biased toward basic and acidic residues. 2 stretches are compositionally biased toward polar residues: residues 307 to 319 (YDSG…SGSE) and 337 to 348 (NRRQSGSFSNIL).

The protein belongs to the WD repeat PROPPIN family. Component of the PI(3,5)P2 regulatory complex.

It localises to the preautophagosomal structure membrane. The protein resides in the vacuole membrane. The protein localises to the endosome membrane. Functionally, the PI(3,5)P2 regulatory complex regulates both the synthesis and turnover of phosphatidylinositol 3,5-bisphosphate (PtdIns(3,5)P2). Necessary for proper vacuole morphology. Plays an important role in osmotically-induced vacuole fragmentation. Required for cytoplasm to vacuole transport (Cvt) vesicle formation, pexophagy and starvation-induced autophagy. Involved in correct ATG9 trafficking to the pre-autophagosomal structure. Might also be involved in premeiotic DNA replication. This Pyricularia oryzae (strain 70-15 / ATCC MYA-4617 / FGSC 8958) (Rice blast fungus) protein is Autophagy-related protein 18 (ATG18).